The primary structure comprises 131 residues: MSGGKGKAGSSEKASTSRSAKAGLTFPVGRVHRLLRKGNYAQRIGSGAPVYLTSVLEYLAAEILELAGNAARDNKKSRIIPRHLQLAIRNDEELNKLLGDVTIAQGGVLPNIHQSLLPAKKAKAGAASQEL.

A disordered region spans residues 1-22 (MSGGKGKAGSSEKASTSRSAKA). Ser-2 carries the N-acetylserine modification. 2 positions are modified to N6-acetyllysine: Lys-5 and Lys-7. Gln-105 bears the N5-methylglutamine mark. Ser-128 is modified (phosphoserine). The short motif at 128 to 129 (SQ) is the [ST]-Q motif element.

The protein belongs to the histone H2A family. In terms of assembly, the nucleosome is a histone octamer containing two molecules each of H2A, H2B, H3 and H4 assembled in one H3-H4 heterotetramer and two H2A-H2B heterodimers. The octamer wraps approximately 147 bp of DNA. Phosphorylated to form H2AS128ph (gamma-H2A) in response to DNA double-strand breaks (DSBs) generated by exogenous genotoxic agents and by stalled replication forks. Phosphorylation is dependent on the DNA damage checkpoint kinases MEC1/ATR and TEL1/ATM, spreads on either side of a detected DSB site and may mark the surrounding chromatin for recruitment of proteins required for DNA damage signaling and repair. Gamma-H2A is removed from the DNA prior to the strand invasion-primer extension step of the repair process and subsequently dephosphorylated. Dephosphorylation is necessary for efficient recovery from the DNA damage checkpoint. Post-translationally, acetylated by ESA1 to form H2AK4ac and H2AK7ac.

It is found in the nucleus. It localises to the chromosome. In terms of biological role, core component of nucleosome which plays a central role in DNA double strand break (DSB) repair. Nucleosomes wrap and compact DNA into chromatin, limiting DNA accessibility to the cellular machineries which require DNA as a template. Histones thereby play a central role in transcription regulation, DNA repair, DNA replication and chromosomal stability. DNA accessibility is regulated via a complex set of post-translational modifications of histones, also called histone code, and nucleosome remodeling. In Candida albicans (strain SC5314 / ATCC MYA-2876) (Yeast), this protein is Histone H2A.2 (HTA2).